Reading from the N-terminus, the 417-residue chain is Serine hydroxymethyltransferase (417 aa).

Residues leucine 121 and 125–127 contribute to the (6S)-5,6,7,8-tetrahydrofolate site; that span reads GHL. Residue lysine 229 is modified to N6-(pyridoxal phosphate)lysine. 355–357 contacts (6S)-5,6,7,8-tetrahydrofolate; sequence SPF.

This sequence belongs to the SHMT family. As to quaternary structure, homodimer. Pyridoxal 5'-phosphate serves as cofactor.

The protein resides in the cytoplasm. The catalysed reaction is (6R)-5,10-methylene-5,6,7,8-tetrahydrofolate + glycine + H2O = (6S)-5,6,7,8-tetrahydrofolate + L-serine. The protein operates within one-carbon metabolism; tetrahydrofolate interconversion. Its pathway is amino-acid biosynthesis; glycine biosynthesis; glycine from L-serine: step 1/1. Its function is as follows. Catalyzes the reversible interconversion of serine and glycine with tetrahydrofolate (THF) serving as the one-carbon carrier. This reaction serves as the major source of one-carbon groups required for the biosynthesis of purines, thymidylate, methionine, and other important biomolecules. Also exhibits THF-independent aldolase activity toward beta-hydroxyamino acids, producing glycine and aldehydes, via a retro-aldol mechanism. The polypeptide is Serine hydroxymethyltransferase (Stenotrophomonas maltophilia (strain K279a)).